The following is a 432-amino-acid chain: Transcriptional adapter 3 (432 aa).

K21 is covalently cross-linked (Glycyl lysine isopeptide (Lys-Gly) (interchain with G-Cter in SUMO2)). Residues 40–69 (IEELDTLQLELETLLSSASRRLRVLEAETQ) adopt a coiled-coil conformation. The tract at residues 87–127 (ARDHELGAPPKHGKPKKQKLEGKTGHGPGPGPGRPKSKNVQ) is disordered. K129 participates in a covalent cross-link: Glycyl lysine isopeptide (Lys-Gly) (interchain with G-Cter in SUMO2). Residues 272 to 319 (NIISPMEDSPIPDMSGKESGADGASTSPRNQNKPFSVPHTKSLESRIK) form a disordered region. Phosphoserine occurs at positions 280 and 298. Positions 295 to 305 (ASTSPRNQNKP) are enriched in polar residues. The stretch at 367–407 (LLRLAKEEVSRQELRQRVRMADNEVMDAFRKIMAARQKKRT) forms a coiled coil. K418 carries the N6-acetyllysine modification.

This sequence belongs to the NGG1 family. As to quaternary structure, the PCAF complex is composed of a number of TBP-associated factors (TAFS), such as TAF5, TAF5L, TAF6, TAF6L, TAF9, TAF10 and TAF12, PCAF, and also PCAF-associated factors (PAFs), such as TADA2L/ADA2, TADA3L/ADA3 and SPT3. Interacts directly with TADA2L and PCAF and also with the high-risk HPV oncoprotein E6. Component of the STAGA transcription coactivator-HAT complex, at least composed of SUPT3H, GCN5L2, TAF5L, TAF6L, SUPT7L, TADA3L, TAD1L, TAF10, TAF12, TRRAP and TAF9. Component of the TFTC-HAT complex. Component of the ADA2A-containing complex (ATAC), composed of KAT14, KAT2A, TADA2L, TADA3L, ZZ3, MBIP, WDR5, YEATS2, CCDC101 and DR1.

It localises to the nucleus. Its function is as follows. Functions as a component of the PCAF complex. The PCAF complex is capable of efficiently acetylating histones in a nucleosomal context. The PCAF complex could be considered as the human version of the yeast SAGA complex. Also known as a coactivator for p53/TP53-dependent transcriptional activation. Component of the ATAC complex, a complex with histone acetyltransferase activity on histones H3 and H4. The polypeptide is Transcriptional adapter 3 (Tada3) (Rattus norvegicus (Rat)).